A 305-amino-acid chain; its full sequence is Dihydroorotate dehydrogenase B (NAD(+)), catalytic subunit (305 aa).

Residues Ser21 and Lys45–Ala46 each bind FMN. Substrate is bound by residues Lys45 and Asn69 to Leu73. FMN contacts are provided by Asn99 and Asn127. A substrate-binding site is contributed by Asn127. The active-site Nucleophile is the Cys130. Residues Lys165 and Ile190 each coordinate FMN. Asn191–Thr192 is a substrate binding site. Residues Gly216, Gly242–Gly243, and Gly264–Thr265 contribute to the FMN site.

Belongs to the dihydroorotate dehydrogenase family. Type 1 subfamily. Heterotetramer of 2 PyrK and 2 PyrD type B subunits. FMN is required as a cofactor.

It is found in the cytoplasm. The catalysed reaction is (S)-dihydroorotate + NAD(+) = orotate + NADH + H(+). Its pathway is pyrimidine metabolism; UMP biosynthesis via de novo pathway; orotate from (S)-dihydroorotate (NAD(+) route): step 1/1. Its function is as follows. Catalyzes the conversion of dihydroorotate to orotate with NAD(+) as electron acceptor. The sequence is that of Dihydroorotate dehydrogenase B (NAD(+)), catalytic subunit (pyrD) from Staphylococcus carnosus (strain TM300).